Here is a 357-residue protein sequence, read N- to C-terminus: Hemolysin VllY (357 aa).

VOC domains are found at residues 12 to 132 and 162 to 313; these read GFEF…FVDR and EIDH…IFTQ. Fe cation contacts are provided by His-165, His-243, and Glu-322.

Belongs to the 4HPPD family. The cofactor is Fe cation.

This is Hemolysin VllY (vllY) from Vibrio vulnificus (strain CMCP6).